The primary structure comprises 207 residues: Small ribosomal subunit protein uS4c (207 aa).

In terms of domain architecture, S4 RNA-binding spans 92 to 150 (MRLDNILFRLGFVPTIPSARQLINHRHILVNNRIVDVPSFHCKPKDIITIGSPKTYQSI).

It belongs to the universal ribosomal protein uS4 family. Part of the 30S ribosomal subunit. Contacts protein S5. The interaction surface between S4 and S5 is involved in control of translational fidelity.

It localises to the plastid. The protein resides in the chloroplast. One of the primary rRNA binding proteins, it binds directly to 16S rRNA where it nucleates assembly of the body of the 30S subunit. Its function is as follows. With S5 and S12 plays an important role in translational accuracy. This is Small ribosomal subunit protein uS4c (rps4) from Equisetum variegatum (Variegated horsetail).